The sequence spans 540 residues: Mitochondrial antiviral-signaling protein (540 aa).

P2 carries the N-acetylproline modification. At 2–513 the chain is on the cytoplasmic side; it reads PFAEDKTYKY…REVPCHRPSP (512 aa). Residues K7 and K10 each participate in a glycyl lysine isopeptide (Lys-Gly) (interchain with G-Cter in ubiquitin) cross-link. One can recognise a CARD domain in the interval 10 to 77; it reads KYICRNFSNF…WVEYFIAALR (68 aa). The interval 10-77 is required for interaction with NLRX1; the sequence is KYICRNFSNF…WVEYFIAALR (68 aa). The S-palmitoyl cysteine moiety is linked to residue C79. The interval 95–297 is disordered; sequence YQPRTSDRPP…EAPANSLPSK (203 aa). Residues 106 to 122 show a composition bias toward pro residues; the sequence is PLEPPSLPAERPGPPTP. The tract at residues 143 to 147 is interaction with TRAF2; sequence PVQET. 2 stretches are compositionally biased toward polar residues: residues 145–165 and 179–216; these read QETQ…QTLS and ESSS…SLTP. 5 positions are modified to phosphoserine: S152, S157, S165, S180, and S188. The interaction with TRAF6 stretch occupies residues 153–158; it reads PGENSE. T215 carries the phosphothreonine modification. Phosphoserine occurs at positions 222 and 233. T234 carries the phosphothreonine modification. R236 bears the Asymmetric dimethylarginine mark. The segment covering 241–266 has biased composition (low complexity); the sequence is PGPTGSVVSTGTSFSSSSPGLASAGA. A phosphoserine mark is found at S253 and S258. Glycyl lysine isopeptide (Lys-Gly) (interchain with G-Cter in ubiquitin) cross-links involve residues K311 and K325. Disordered regions lie at residues 314-358 and 373-419; these read ANPA…RAGM and SAST…SELS. 3 stretches are compositionally biased toward polar residues: residues 317-331, 339-355, and 373-382; these read ASVS…TSSK, NALT…NSTR, and SASTVPTDGS. Over residues 388 to 403 the composition is skewed to low complexity; sequence TPAAPTPAGATGGSSA. Position 408 is a phosphoserine (S408). The short motif at 439–442 is the pLxIS motif element; it reads LAIS. The residue at position 442 (S442) is a Phosphoserine; by TBK1. The tract at residues 455-460 is interaction with TRAF6; the sequence is PEENEY. Glycyl lysine isopeptide (Lys-Gly) (interchain with G-Cter in ubiquitin) cross-links involve residues K461 and K500. K461 is covalently cross-linked ((Microbial infection) Glycyl lysine isopeptide (Lys-Gly) (interchain with G-Cter in UFM1)). The interval 476–507 is disordered; the sequence is IQLLEGNPGPPADPDGGPRPQADRKFQEREVP. Positions 496–507 are enriched in basic and acidic residues; that stretch reads QADRKFQEREVP. A helical transmembrane segment spans residues 514–534; sequence GALWLQVAVTGVLVVTLLVVL. Over 535 to 540 the chain is Mitochondrial intermembrane; the sequence is YRRRLH.

In terms of assembly, self-associates and polymerizes (via CARD domains) to form 400 nM long three-stranded helical filaments on mitochondria, filament nucleation requires interaction with RIGI whose CARD domains act as a template for filament assembly. Interacts with RIGI, IFIH1/MDA5, TRAF2, TRAF6 and C1QBP. May interact with FADD, RIPK1, CHUK and IKBKB. Interacts (when phosphorylated) with IRF3; following activation and phosphorylation on the pLxIS motif by TBK1, recruits IRF3. Interacts with NLRX1. Interaction with NLRX1 requires the CARD domain. Interacts with PSMA7. Interacts with TRAFD1. Interacts (via C-terminus) with PCBP2 in a complex containing MAVS/IPS1, PCBP2 and ITCH. Interacts with CYLD. Interacts with SRC. Interacts with DHX58/LGP2 and IKBKE. Interacts with STING1. Interacts with IFIT3 (via N-terminus). Interacts with TBK1 only in the presence of IFIT3. Interacts with TTLL12; the interaction prevents MAVS binding to TBK1 and IKBKE. Interacts with MUL1. Interacts with ANKRD17. Interacts with NDFIP1. Interacts with SMURF1; the interaction is mediated by NDFIP1 and leads to MAVS ubiquitination and degradation. Interacts with UBXN1; this interaction inhibits MAVS-mediated antiviral pathway. Interacts (via C-terminus) with GPATCH3; the interaction is markedly increased upon viral infection. Directly interacts (via CARD domain) with ATG5 and ATG12, either as ATG5 and ATG12 monomers or as ATG12-ATG5 conjugates. Interacts with DHX33 (via the helicase C-terminal domain). Interacts with DDX3X (via C-terminus); this interaction occurs rapidly, but transiently after Sendai virus infection. The interaction with DDX3X potentiates MAVS-mediated IFNB induction. Conversely inhibition of this interaction, for instance by HCV core protein, prevents MAVS-mediated IFNB induction. Transiently interacts with TRAF3 early during Sendai virus infection. Interacts with CLPB; the interaction is enhanced by Sendai virus infection. Interacts with TRAF3IP3. Interacts with TOMM70; the interaction is enhanced by Sendai virus infection. Interacts with ZNFX1. Interacts with N4BP3; this interaction promotes the polyubiquitination of MAVS. Interacts with TAX1BP1; this interaction induces MAVS polyubiquitination. Interacts with NLRP3; promoting NLRP3 recruitment to mitochondria and activation of the NLRP3 inflammasome. Interacts with ECSIT; this interaction bridges RIGI to the MAVS complex at the mitochondrion. Interacts with UBL7; this interaction promotes MAVS 'Lys-27'-linked ubiquitination leading to type I interferon production. Interacts (via transmembrane domain) with SMIM30/MAVI1 (via transmembrane domain); the interaction disrupts MAVS interaction with RIGI and inhibits MAVS aggregation, resulting in the repression of type I interferon signaling and innate immune responses. As to quaternary structure, (Microbial infection) Interacts with hepatitis C virus (HCV) NS3/4A protease; this interaction leads to MAVS cleavage, thereby preventing the establishment of an antiviral state. (Microbial infection) Interacts with hepatitis GB virus B NS3/4A protease; this interaction leads to MAVS cleavage. In terms of assembly, (Microbial infection) Interacts with human respiratory syncytial virus/HRSV protein NS1; this interaction disrupts MAVS binding to RIGI. As to quaternary structure, (Microbial infection) Interacts with Andes virus Nnon-structural protein NS-S; this interaction may reduce MAVS ubiquitination and leads to inhibition of MAVS-induced type-I IFN signaling pathway. (Microbial infection) Interacts with Seneca Valley virus protease 3C; this interaction allows the cleavage of MAVS and subsequent suppression of host innate immunity. In terms of assembly, (Microbial infection) Interacts with SARS-CoV virus protein ORF9b; this interaction mediates MAVS proteasomal degradation. As to quaternary structure, (Microbial infection) Interacts with SARS-CoV-2 virus protein M; this interaction impairs MAVS self-association and its recruitment of downstream components. (Microbial infection) Interacts with foot-and-mouth disease virus protein VP1; this interaction competes with TRAF3 interaction to MAVS leading to suppression of host innate immunity. In terms of assembly, (Microbial infection) Interacts with Epstein-Barr virus protein BILF1; this interaction mediates MAVS routing from mitochondria to lysosomes. Following activation, phosphorylated by TBK1 at Ser-442 in the pLxIS motif. The phosphorylated pLxIS motif constitutes an IRF3-binding motif, leading to recruitment of the transcription factor IRF3 to induce type-I interferons and other cytokines. Post-translationally, ubiquitinated. Undergoes 'Lys-48'-linked polyubiquitination catalyzed by ITCH; ITCH-dependent polyubiquitination is mediated by the interaction with PCBP2 and leads to MAVS/IPS1 proteasomal degradation. Ubiquitinated by RNF125, leading to its degradation by the proteasome. Undergoes 'Lys-48'-linked ubiquitination catalyzed by SMURF1. Undergoes 'Lys-48'-linked ubiquitination catalyzed by MARCHF5 at Lys-7 and Lys-500, leading to proteasomal degradation. Ubiquitinated via 'Lys-63'-linked ubiquitination at Lys-10, Lys-311 and Lys-461 by UBE2N and TRIM31, promoting MAVS polymerization and formation of three-stranded helical filaments on mitochondria. Undergoes 'Lys-63'-linked ubiquitination leading to enhanced interaction between MAVS and TRAF2. Undergoes 'Lys-27'-linked ubiquitination by TRIM21 leading to enhanced interaction between MAVS and TBK1. Deubiquitinated by USP10 leading to attenuation of RIGI-mediated MAVS aggregation and production of type I interferon. Undergoes 'Lys-48'-linked polyubiquitination catalyzed by RNF115 leading to its degradation. In terms of processing, palmitoylated by ZHDDC4. Palmitoylation promotes MAVS stabilization and activation by inhibiting 'Lys-48'- but facilitating 'Lys-63'-linked ubiquitination. Proteolytically cleaved by apoptotic caspases during apoptosis, leading to its inactivation. Cleavage by CASP3 during virus-induced apoptosis inactivates it, preventing cytokine overproduction. Post-translationally, (Microbial infection) Cleaved and degraded by hepatitis A virus (HAV) protein 3ABC allowing the virus to disrupt the activation of host IRF3 through the MDA5 pathway. In terms of processing, (Microbial infection) Cleaved by the protease 2A of coxsackievirus B3, poliovirus and enterovirus 71 allowing the virus to disrupt the host type I interferon production. (Microbial infection) Cleaved by Seneca Valley virus protease 3C allowing the virus to suppress interferon type-I production. Post-translationally, (Microbial infection) Cleaved by HCV protease NS3/4A, thereby preventing the establishment of an antiviral state. In terms of processing, (Microbial infection) UFMylated by ULF1 in association with Epstein-Barr virus BILF1; leading to MAVS routing to the lysosome. Present in T-cells, monocytes, epithelial cells and hepatocytes (at protein level). Ubiquitously expressed, with highest levels in heart, skeletal muscle, liver, placenta and peripheral blood leukocytes.

Its subcellular location is the mitochondrion outer membrane. It is found in the mitochondrion. The protein resides in the peroxisome. Adapter required for innate immune defense against viruses. Acts downstream of DHX33, RIGI and IFIH1/MDA5, which detect intracellular dsRNA produced during viral replication, to coordinate pathways leading to the activation of NF-kappa-B, IRF3 and IRF7, and to the subsequent induction of antiviral cytokines such as IFNB and RANTES (CCL5). Peroxisomal and mitochondrial MAVS act sequentially to create an antiviral cellular state. Upon viral infection, peroxisomal MAVS induces the rapid interferon-independent expression of defense factors that provide short-term protection, whereas mitochondrial MAVS activates an interferon-dependent signaling pathway with delayed kinetics, which amplifies and stabilizes the antiviral response. May activate the same pathways following detection of extracellular dsRNA by TLR3. May protect cells from apoptosis. Involved in NLRP3 inflammasome activation by mediating NLRP3 recruitment to mitochondria. This chain is Mitochondrial antiviral-signaling protein, found in Homo sapiens (Human).